A 536-amino-acid chain; its full sequence is Cytoplasmic dynein 2 intermediate chain 2 (536 aa).

S15 bears the Phosphoserine mark. A DYNLL2 binding region spans residues 80–93 (RNHVDAQVQTEAPV). A DYNLRB1 binding region spans residues 106-131 (PRLAAFLRRVEAMVIRELNKNWQSHA). WD repeat units lie at residues 215–255 (EVPS…DPLL), 264–308 (THTD…QLQL), 390–430 (PHGG…PLTS), 433–473 (LSLK…QKPT), and 480–520 (QDES…TEQG).

The protein belongs to the dynein light intermediate chain family. The cytoplasmic dynein 2 complex consists of two catalytic heavy chains (HCs) and a number of non-catalytic subunits presented by intermediate chains (ICs), light intermediate chains (LICs) and light chains (LCs). Among them, a heavy chain (DYNC2H1), two intermediate chains (DYNC2I2 and DYNC2I1), a light intermediate chain (DYNC2LI1), and a light chain (DYNLT2B) are unique to the cytoplasmic dynein complex 2, but a subset of the light chains are also shared by dynein-1 and dynein-2 complexes. Interacts with DYNC2I1; their C-terminal domains each bind a copy of the heavy chain, and their extended N-terminal regions are held together by an array of light chain dimers. Interacts with DYNLL2; this interaction is essential for dynein-2-mediated retrograde trafficking of ciliary proteins. Interacts with DYNLRB1; this interaction is essential for dynein-2-mediated retrograde trafficking of ciliary proteins. Interacts (via the WD domains) with MAP3K7 and TAB3. Interacts (via WD domains) with TAB2 (via C-terminus). Interacts (via WD domains) with TRAF6 (via TRAF-type domains). In terms of tissue distribution, expressed in several cell lines (at protein level).

It localises to the cytoplasm. It is found in the cytoskeleton. Its subcellular location is the cilium basal body. The protein localises to the cilium axoneme. The protein resides in the microtubule organizing center. It localises to the centrosome. It is found in the cell projection. Its subcellular location is the cilium. The protein localises to the filopodium. Acts as one of several non-catalytic accessory components of the cytoplasmic dynein 2 complex (dynein-2 complex), a motor protein complex that drives the movement of cargos along microtubules within cilia and flagella in concert with the intraflagellar transport (IFT) system. DYNC2I2 plays a major role in retrograde ciliary protein trafficking and in ciliogenesis. Required also to maintain a functional transition zone. In terms of biological role, acts as a negative regulator of the Toll-like and IL-1R receptor signaling pathways. Inhibits the MAP3K7-induced NF-kappa-B activation pathway. Inhibits MAP3K7 phosphorylation at 'Thr-184' and 'Thr-187' upon Il-1 beta stimulation. The polypeptide is Cytoplasmic dynein 2 intermediate chain 2 (Homo sapiens (Human)).